Consider the following 142-residue polypeptide: ATP synthase epsilon chain (142 aa).

It belongs to the ATPase epsilon chain family. F-type ATPases have 2 components, CF(1) - the catalytic core - and CF(0) - the membrane proton channel. CF(1) has five subunits: alpha(3), beta(3), gamma(1), delta(1), epsilon(1). CF(0) has three main subunits: a, b and c.

Its subcellular location is the cell inner membrane. Its function is as follows. Produces ATP from ADP in the presence of a proton gradient across the membrane. The polypeptide is ATP synthase epsilon chain (Coxiella burnetii (strain CbuK_Q154) (Coxiella burnetii (strain Q154))).